Reading from the N-terminus, the 407-residue chain is Imidazolonepropionase (407 aa).

Residues His-74 and His-76 each coordinate Fe(3+). Zn(2+) contacts are provided by His-74 and His-76. Residues Arg-83, Tyr-146, and His-179 each contribute to the 4-imidazolone-5-propanoate site. Residue Tyr-146 coordinates N-formimidoyl-L-glutamate. Residue His-244 coordinates Fe(3+). His-244 is a Zn(2+) binding site. Residue Gln-247 participates in 4-imidazolone-5-propanoate binding. Asp-319 provides a ligand contact to Fe(3+). A Zn(2+)-binding site is contributed by Asp-319. N-formimidoyl-L-glutamate contacts are provided by Asn-321 and Gly-323. Thr-324 provides a ligand contact to 4-imidazolone-5-propanoate.

The protein belongs to the metallo-dependent hydrolases superfamily. HutI family. Zn(2+) serves as cofactor. Requires Fe(3+) as cofactor.

The protein resides in the cytoplasm. It catalyses the reaction 4-imidazolone-5-propanoate + H2O = N-formimidoyl-L-glutamate. Its pathway is amino-acid degradation; L-histidine degradation into L-glutamate; N-formimidoyl-L-glutamate from L-histidine: step 3/3. Catalyzes the hydrolytic cleavage of the carbon-nitrogen bond in imidazolone-5-propanoate to yield N-formimidoyl-L-glutamate. It is the third step in the universal histidine degradation pathway. The chain is Imidazolonepropionase from Salmonella typhimurium (strain LT2 / SGSC1412 / ATCC 700720).